The primary structure comprises 270 residues: Nuclear receptor-interacting protein 2 (270 aa).

The segment covering 1 to 27 (MSTGQEARRDEGDSRKEQEASLRDRAH) has biased composition (basic and acidic residues). Residues 1–33 (MSTGQEARRDEGDSRKEQEASLRDRAHLSQQRQ) form a disordered region. An interaction with NR1F2 region spans residues 61-99 (KDLQPHSVIQRRLVEGNQRRLQGESPLLQALIRGHDSSR). Residues 192-196 (LQTLL) carry the LXXLL motif motif.

In terms of assembly, interacts with NR1F2, RARA and THRB in a ligand-dependent manner. In terms of tissue distribution, expression is restricted to the central nervous system (neurons in the dentate gyrus of the hippocampus, the amygdala, thalamic and hypothalamic regions).

The protein localises to the nucleus. Its function is as follows. Down-regulates transcriptional activation by nuclear receptors, such as NR1F2. This Mus musculus (Mouse) protein is Nuclear receptor-interacting protein 2 (Nrip2).